The chain runs to 629 residues: Nicotinic receptor-associated protein 1 (629 aa).

2 C2 domains span residues 1–144 (MNQP…KAHL) and 162–299 (RTGS…ELLL). Ca(2+) is bound by residues aspartate 33, aspartate 39, aspartate 108, aspartate 110, aspartate 122, aspartate 192, aspartate 198, aspartate 254, aspartate 256, and aspartate 274. Residues 342–561 (EFAVAVDFTA…LDPDVVQENL (220 aa)) enclose the VWFA domain. Disordered stretches follow at residues 581-600 (GFQP…PPDY) and 607-629 (IGRR…PPMY).

This sequence belongs to the copine family. In terms of assembly, interacts with nicotinic acetylcholine receptor. Ca(2+) is required as a cofactor.

The protein localises to the cell membrane. Its function is as follows. Exhibits calcium-dependent phospholipid binding properties. May function in membrane trafficking. Regulates synaptic levels of nicotinic acetylcholine receptor subunit lev-1 and unc-38 in the nerve cord. Involved in nicotinic acetylcholine receptor (nAChR)-mediated sensitivity to nicotine and levamisole. Affects directional sperm motility. This chain is Nicotinic receptor-associated protein 1, found in Caenorhabditis briggsae.